Consider the following 323-residue polypeptide: tRNA U34 carboxymethyltransferase (323 aa).

Carboxy-S-adenosyl-L-methionine-binding positions include Lys91, Trp105, Lys110, Gly130, 152–154, 181–182, Met196, Tyr200, and Arg315; these read DPT and IE.

The protein belongs to the class I-like SAM-binding methyltransferase superfamily. CmoB family. Homotetramer.

It carries out the reaction carboxy-S-adenosyl-L-methionine + 5-hydroxyuridine(34) in tRNA = 5-carboxymethoxyuridine(34) in tRNA + S-adenosyl-L-homocysteine + H(+). Functionally, catalyzes carboxymethyl transfer from carboxy-S-adenosyl-L-methionine (Cx-SAM) to 5-hydroxyuridine (ho5U) to form 5-carboxymethoxyuridine (cmo5U) at position 34 in tRNAs. In Escherichia coli O7:K1 (strain IAI39 / ExPEC), this protein is tRNA U34 carboxymethyltransferase.